The chain runs to 497 residues: uncharacterized protein (497 aa).

Ca(2+) is bound by residues aspartate 12, threonine 13, and cysteine 52. Cysteine 52 serves as the catalytic Nucleophile. The residue at position 52 (cysteine 52) is a 3-oxoalanine (Cys). Histidine 102 is a catalytic residue. Aspartate 284 and histidine 285 together coordinate Ca(2+).

Belongs to the sulfatase family. Ca(2+) is required as a cofactor. Post-translationally, the conversion to 3-oxoalanine (also known as C-formylglycine, FGly), of a serine or cysteine residue in prokaryotes and of a cysteine residue in eukaryotes, is critical for catalytic activity.

This is an uncharacterized protein from Escherichia coli (strain K12).